Here is an 86-residue protein sequence, read N- to C-terminus: Small ribosomal subunit protein bS20 (86 aa).

The disordered stretch occupies residues 1 to 25; sequence MANIKSAIKRAKTSEKRRVANSQEK.

Belongs to the bacterial ribosomal protein bS20 family.

In terms of biological role, binds directly to 16S ribosomal RNA. This is Small ribosomal subunit protein bS20 from Exiguobacterium sp. (strain ATCC BAA-1283 / AT1b).